Here is a 686-residue protein sequence, read N- to C-terminus: XK-related protein 5 (686 aa).

5 consecutive transmembrane segments (helical) span residues 33–53 (LLWGWLALAVLLPGFLVQALS), 205–225 (HFWVFVVAGAHWLVMTFWLVA), 239–259 (LFNLLVGAVYILCYLSFWDSP), 265–285 (VTFYMVMLLENTILLLLATDF), and 297–317 (IAGVLSGFLIGSVSLVIYYSL). Disordered stretches follow at residues 340–362 (DKTERRASPRATDLAGKRTESSG), 444–470 (LQRKALSAQRELPSSSRHPSTLENSSA), and 490–589 (FASD…VGLA). 2 stretches are compositionally biased toward polar residues: residues 455–470 (LPSSSRHPSTLENSSA) and 490–509 (FASDQQDEAPTQNPAATQGE). The segment covering 523 to 536 (QGKGTGGQQRGGEG) has biased composition (gly residues). Positions 550–567 (VATSSQQEGSPATLQTAH) are enriched in polar residues.

This sequence belongs to the XK family.

It is found in the cell membrane. The chain is XK-related protein 5 from Pan troglodytes (Chimpanzee).